We begin with the raw amino-acid sequence, 689 residues long: Glycine--tRNA ligase beta subunit (689 aa).

It belongs to the class-II aminoacyl-tRNA synthetase family. In terms of assembly, tetramer of two alpha and two beta subunits.

The protein resides in the cytoplasm. The catalysed reaction is tRNA(Gly) + glycine + ATP = glycyl-tRNA(Gly) + AMP + diphosphate. This is Glycine--tRNA ligase beta subunit from Salmonella dublin (strain CT_02021853).